A 515-amino-acid chain; its full sequence is G-protein coupled receptor 176 (515 aa).

Residues 1–16 show a composition bias toward polar residues; the sequence is MGHNGSWISPNASEPH. Positions 1–20 are disordered; the sequence is MGHNGSWISPNASEPHNASG. Residues 1 to 42 lie on the Extracellular side of the membrane; the sequence is MGHNGSWISPNASEPHNASGAEAAGVNRSALGEFGEAQLYRQ. N-linked (GlcNAc...) asparagine glycans are attached at residues Asn4, Asn11, Asn17, and Asn27. The helical transmembrane segment at 43-63 threads the bilayer; it reads FTTTVQVVIFIGSLLGNFMVL. The Cytoplasmic portion of the chain corresponds to 64-82; sequence WSTCRTTVFKSVTNRFIKN. The helical transmembrane segment at 83 to 103 threads the bilayer; the sequence is LACSGICASLVCVPFDIILST. Residues 104 to 118 are Extracellular-facing; it reads SPHCCWWIYTMLFCK. Residues 119–139 traverse the membrane as a helical segment; sequence VVKFLHKVFCSVTILSFPAIA. At 140–160 the chain is on the cytoplasmic side; that stretch reads LDRYYSVLYPLERKISDAKSR. The chain crosses the membrane as a helical span at residues 161-181; that stretch reads ELVMYIWAHAVVASVPVFAVT. The Extracellular segment spans residues 182–207; it reads NVADIYATSTCTEVWSNSLGHLVYVL. The helical transmembrane segment at 208–228 threads the bilayer; the sequence is VYNITTVIVPVVVVFLFLILI. Topologically, residues 229-267 are cytoplasmic; that stretch reads RRALSASQKKKVIIAALRTPQNTISIPYASQREAELHAT. A helical membrane pass occupies residues 268 to 288; that stretch reads LLSMVMVFILCSVPYATLVVY. Residues 289 to 299 are Extracellular-facing; the sequence is QTVLNVPDTSV. The helical transmembrane segment at 300–320 threads the bilayer; sequence FLLLTAVWLPKVSLLANPVLF. Residues 321–515 are Cytoplasmic-facing; the sequence is LTVNKSVRKC…KVSIFPKVDS (195 aa).

This sequence belongs to the G-protein coupled receptor 1 family.

It localises to the cell membrane. Its function is as follows. Orphan receptor involved in normal circadian rhythm behavior. Acts through the G-protein subclass G(z)-alpha and has an agonist-independent basal activity to repress cAMP production. The protein is G-protein coupled receptor 176 (GPR176) of Homo sapiens (Human).